The following is a 115-amino-acid chain: Large ribosomal subunit protein uL18 (115 aa).

It belongs to the universal ribosomal protein uL18 family. Part of the 50S ribosomal subunit; part of the 5S rRNA/L5/L18/L25 subcomplex. Contacts the 5S and 23S rRNAs.

This is one of the proteins that bind and probably mediate the attachment of the 5S RNA into the large ribosomal subunit, where it forms part of the central protuberance. The protein is Large ribosomal subunit protein uL18 of Vesicomyosocius okutanii subsp. Calyptogena okutanii (strain HA).